Reading from the N-terminus, the 156-residue chain is 6,7-dimethyl-8-ribityllumazine synthase (156 aa).

5-amino-6-(D-ribitylamino)uracil-binding positions include F23, A57–E59, and A81–I83. A (2S)-2-hydroxy-3-oxobutyl phosphate-binding site is contributed by S86–T87. H89 acts as the Proton donor in catalysis. Residue F114 coordinates 5-amino-6-(D-ribitylamino)uracil. R128 is a (2S)-2-hydroxy-3-oxobutyl phosphate binding site.

The protein belongs to the DMRL synthase family.

It carries out the reaction (2S)-2-hydroxy-3-oxobutyl phosphate + 5-amino-6-(D-ribitylamino)uracil = 6,7-dimethyl-8-(1-D-ribityl)lumazine + phosphate + 2 H2O + H(+). It functions in the pathway cofactor biosynthesis; riboflavin biosynthesis; riboflavin from 2-hydroxy-3-oxobutyl phosphate and 5-amino-6-(D-ribitylamino)uracil: step 1/2. Functionally, catalyzes the formation of 6,7-dimethyl-8-ribityllumazine by condensation of 5-amino-6-(D-ribitylamino)uracil with 3,4-dihydroxy-2-butanone 4-phosphate. This is the penultimate step in the biosynthesis of riboflavin. In Sulfurospirillum multivorans (Dehalospirillum multivorans), this protein is 6,7-dimethyl-8-ribityllumazine synthase.